The chain runs to 288 residues: Acetyl-coenzyme A carboxylase carboxyl transferase subunit beta (288 aa).

One can recognise a CoA carboxyltransferase N-terminal domain in the interval 34-288 (LFAKCPACKH…HLVAFHGGGQ (255 aa)). Cys38, Cys41, Cys56, and Cys59 together coordinate Zn(2+). The segment at 38–59 (CPACKHMIYKKDLGLAKICPTC) adopts a C4-type zinc-finger fold.

This sequence belongs to the AccD/PCCB family. In terms of assembly, acetyl-CoA carboxylase is a heterohexamer composed of biotin carboxyl carrier protein (AccB), biotin carboxylase (AccC) and two subunits each of ACCase subunit alpha (AccA) and ACCase subunit beta (AccD). Zn(2+) is required as a cofactor.

It localises to the cytoplasm. It catalyses the reaction N(6)-carboxybiotinyl-L-lysyl-[protein] + acetyl-CoA = N(6)-biotinyl-L-lysyl-[protein] + malonyl-CoA. It functions in the pathway lipid metabolism; malonyl-CoA biosynthesis; malonyl-CoA from acetyl-CoA: step 1/1. Functionally, component of the acetyl coenzyme A carboxylase (ACC) complex. Biotin carboxylase (BC) catalyzes the carboxylation of biotin on its carrier protein (BCCP) and then the CO(2) group is transferred by the transcarboxylase to acetyl-CoA to form malonyl-CoA. The sequence is that of Acetyl-coenzyme A carboxylase carboxyl transferase subunit beta from Streptococcus pyogenes serotype M6 (strain ATCC BAA-946 / MGAS10394).